Reading from the N-terminus, the 63-residue chain is MIVVPVKEGENIEKALKKFKRKFEKTGIVKELRSRQQFDKPSVTKRLKKERAVYVQKLQQVED.

The protein belongs to the bacterial ribosomal protein bS21 family.

This chain is Small ribosomal subunit protein bS21, found in Bacteroides fragilis (strain ATCC 25285 / DSM 2151 / CCUG 4856 / JCM 11019 / LMG 10263 / NCTC 9343 / Onslow / VPI 2553 / EN-2).